The primary structure comprises 611 residues: Chaperone protein DnaK (611 aa).

Thr-173 carries the post-translational modification Phosphothreonine; by autocatalysis. Disordered stretches follow at residues 525–548 (DNIS…ALEG) and 573–611 (YQQA…EDKK). Residues 529-542 (EEDKSNAESKKDAL) show a composition bias toward basic and acidic residues. The segment covering 574-591 (QQAQQAQQQAQDGAQQTQ) has biased composition (low complexity). The segment covering 599–611 (AEFKEVNDDEDKK) has biased composition (basic and acidic residues).

It belongs to the heat shock protein 70 family.

In terms of biological role, acts as a chaperone. The protein is Chaperone protein DnaK of Staphylococcus haemolyticus (strain JCSC1435).